Here is a 488-residue protein sequence, read N- to C-terminus: Acetyl-CoA decarbonylase/synthase complex subunit gamma (488 aa).

One can recognise a 4Fe-4S domain in the interval 1–61; sequence MPKKISAMDI…FEKNKKKIIE (61 aa). [4Fe-4S] cluster is bound by residues cysteine 19, cysteine 22, cysteine 27, and cysteine 44.

As to quaternary structure, heterodimer of delta and gamma chains. The ACDS complex is made up of alpha, epsilon, beta, gamma and delta chains with a probable stoichiometry of (alpha(2)epsilon(2))(4)-beta(8)-(gamma(1)delta(1))(8). Corrinoid is required as a cofactor. It depends on [4Fe-4S] cluster as a cofactor.

It carries out the reaction 5,6,7,8-tetrahydrosarcinapterin + methyl-Co(III)-[corrinoid Fe-S protein] = 5-methyltetrahydrosarcinapterin + Co(I)-[corrinoid Fe-S protein] + H(+). Part of a complex that catalyzes the reversible cleavage of acetyl-CoA, allowing autotrophic growth from CO(2). The chain is Acetyl-CoA decarbonylase/synthase complex subunit gamma from Methanocaldococcus jannaschii (strain ATCC 43067 / DSM 2661 / JAL-1 / JCM 10045 / NBRC 100440) (Methanococcus jannaschii).